Here is a 663-residue protein sequence, read N- to C-terminus: Protein KINESIN LIGHT CHAIN-RELATED 2 (663 aa).

A compositionally biased stretch (basic and acidic residues) spans 1–14 (MDVGESNERVKDDS). Disordered stretches follow at residues 1–24 (MDVG…RSPL) and 86–146 (GESK…KVSV). A Phosphoserine modification is found at serine 19. The span at 86 to 100 (GESKKEIILEKKEES) shows a compositional bias: basic and acidic residues. Positions 102–111 (GEGSLSQKKP) are enriched in polar residues. 11 TPR repeats span residues 147 to 181 (DEES…ALRA), 200 to 233 (VMSL…PMIE), 243 to 276 (FAGC…QRQV), 285 to 318 (GETC…HKEN), 329 to 363 (AADR…SSQN), 369 to 402 (AAVD…FKQG), 411 to 444 (ALVY…YLKP), 454 to 487 (ATGF…YANA), 495 to 528 (AGIE…FRNS), 537 to 570 (GIAL…LEKE), and 579 to 612 (LAVY…REEK).

This sequence belongs to the kinesin light chain family.

The polypeptide is Protein KINESIN LIGHT CHAIN-RELATED 2 (Arabidopsis thaliana (Mouse-ear cress)).